Consider the following 715-residue polypeptide: 1,4-alpha-glucan branching enzyme GlgB (715 aa).

Catalysis depends on Asp-396, which acts as the Nucleophile. Residue Glu-449 is the Proton donor of the active site.

This sequence belongs to the glycosyl hydrolase 13 family. GlgB subfamily. As to quaternary structure, monomer.

It carries out the reaction Transfers a segment of a (1-&gt;4)-alpha-D-glucan chain to a primary hydroxy group in a similar glucan chain.. It participates in glycan biosynthesis; glycogen biosynthesis. Its function is as follows. Catalyzes the formation of the alpha-1,6-glucosidic linkages in glycogen by scission of a 1,4-alpha-linked oligosaccharide from growing alpha-1,4-glucan chains and the subsequent attachment of the oligosaccharide to the alpha-1,6 position. The chain is 1,4-alpha-glucan branching enzyme GlgB from Vibrio vulnificus (strain YJ016).